The following is a 164-amino-acid chain: 3-isopropylmalate dehydratase small subunit 1 (164 aa).

It belongs to the LeuD family. LeuD type 2 subfamily. Heterodimer of LeuC and LeuD.

It catalyses the reaction (2R,3S)-3-isopropylmalate = (2S)-2-isopropylmalate. It participates in amino-acid biosynthesis; L-leucine biosynthesis; L-leucine from 3-methyl-2-oxobutanoate: step 2/4. Its function is as follows. Catalyzes the isomerization between 2-isopropylmalate and 3-isopropylmalate, via the formation of 2-isopropylmaleate. The protein is 3-isopropylmalate dehydratase small subunit 1 (leuD1) of Pyrococcus abyssi (strain GE5 / Orsay).